We begin with the raw amino-acid sequence, 262 residues long: Tropinone reductase homolog At2g30670 (262 aa).

13–37 (LVTGGASGIGHAIVEELAGLGARIY) serves as a coordination point for NADP(+). Serine 146 contributes to the substrate binding site. Catalysis depends on tyrosine 159, which acts as the Proton acceptor.

The protein belongs to the short-chain dehydrogenases/reductases (SDR) family. SDR65C subfamily.

In Arabidopsis thaliana (Mouse-ear cress), this protein is Tropinone reductase homolog At2g30670.